We begin with the raw amino-acid sequence, 94 residues long: Aspartyl/glutamyl-tRNA(Asn/Gln) amidotransferase subunit C (94 aa).

This sequence belongs to the GatC family. Heterotrimer of A, B and C subunits.

The catalysed reaction is L-glutamyl-tRNA(Gln) + L-glutamine + ATP + H2O = L-glutaminyl-tRNA(Gln) + L-glutamate + ADP + phosphate + H(+). It catalyses the reaction L-aspartyl-tRNA(Asn) + L-glutamine + ATP + H2O = L-asparaginyl-tRNA(Asn) + L-glutamate + ADP + phosphate + 2 H(+). In terms of biological role, allows the formation of correctly charged Asn-tRNA(Asn) or Gln-tRNA(Gln) through the transamidation of misacylated Asp-tRNA(Asn) or Glu-tRNA(Gln) in organisms which lack either or both of asparaginyl-tRNA or glutaminyl-tRNA synthetases. The reaction takes place in the presence of glutamine and ATP through an activated phospho-Asp-tRNA(Asn) or phospho-Glu-tRNA(Gln). The polypeptide is Aspartyl/glutamyl-tRNA(Asn/Gln) amidotransferase subunit C (Campylobacter jejuni subsp. jejuni serotype O:6 (strain 81116 / NCTC 11828)).